The sequence spans 189 residues: NADH-quinone oxidoreductase subunit B (189 aa).

[4Fe-4S] cluster-binding residues include C39, C40, C104, and C135.

The protein belongs to the complex I 20 kDa subunit family. In terms of assembly, NDH-1 is composed of 14 different subunits. Subunits NuoB, C, D, E, F, and G constitute the peripheral sector of the complex. [4Fe-4S] cluster is required as a cofactor.

The protein localises to the cell inner membrane. The enzyme catalyses a quinone + NADH + 5 H(+)(in) = a quinol + NAD(+) + 4 H(+)(out). Functionally, NDH-1 shuttles electrons from NADH, via FMN and iron-sulfur (Fe-S) centers, to quinones in the respiratory chain. The immediate electron acceptor for the enzyme in this species is believed to be a menaquinone. Couples the redox reaction to proton translocation (for every two electrons transferred, four hydrogen ions are translocated across the cytoplasmic membrane), and thus conserves the redox energy in a proton gradient. The protein is NADH-quinone oxidoreductase subunit B of Chlorobium luteolum (strain DSM 273 / BCRC 81028 / 2530) (Pelodictyon luteolum).